We begin with the raw amino-acid sequence, 718 residues long: MFQMAKRAFLSTTLTLGLLAGSALPFLPASAVYADPDTAVTNKQSFSTDVIYQVFTDRFLDGNPSNNPTGAAYDATCSNLKLYCGGDWQGLINKINDNYFSDLGVTALWISQPVENIFATINYSGVTNTAYHGYWARDFKKTNPYFGTMADFQNLITTAHAKGIKIVIDFAPNHTSPAMETDTSFAENGRLYDNGTLVGGYTNDTNGYFHHNGGSDFSSLENGIYKNLYDLADFNHNNATIDKYFKDAIKLWLDMGVDGIRVDAVKHMPLGWQKSWMSSIYAHKPVFTFGEWFLGSAASDADNTDFANKSGMSLLDFRFNSAVRNVFRDNTSNMYALDSMINSTATDYNQVNDQVTFIDNHDMDRFKTSAVNNRRLEQALAFTLTSRGVPAIYYGTEQYLTGNGDPDNRAKMPSFSKSTTAFNVISKLAPLRKSNPAIAYGSTQQRWINNDVYVYERKFGKSVAVVAVNRNLSTSASITGLSTSLPTGSYTDVLGGVLNGNNITSTNGSINNFTLAAGATAVWQYTTAETTPTIGHVGPVMGKPGNVVTIDGRGFGSTKGTVYFGTTAVTGAAITSWEDTQIKVTIPSVAAGNYAVKVAASGVNSNAYNNFTILTGDQVTVRFVVNNASTTLGQNLYLTGNVAELGNWSTGSTAIGPAFNQVIHQYPTWYYDVSVPAGKQLEFKFFKKNGSTITWESGSNHTFTTPASGTATVTVNWQ.

A signal peptide spans 1 to 34 (MFQMAKRAFLSTTLTLGLLAGSALPFLPASAVYA). Residues 35–172 (DPDTAVTNKQ…GIKIVIDFAP (138 aa)) form an A1 region. 4 residues coordinate Ca(2+): Asp61, Asn63, Asn66, and Asn67. Cys77 and Cys84 form a disulfide bridge. Residues Gly85 and Asp87 each contribute to the Ca(2+) site. Residue 134-135 (YW) coordinates substrate. Asn173 contributes to the Ca(2+) binding site. The interval 173 to 236 (NHTSPAMETD…NLYDLADFNH (64 aa)) is b. His174 lines the substrate pocket. Ile224 provides a ligand contact to Ca(2+). Substrate contacts are provided by residues 227–230 (NLYD) and Asp230. Asp233 contributes to the Ca(2+) binding site. The segment at 237–440 (NNATIDKYFK…LRKSNPAIAY (204 aa)) is A2. Position 261 (Arg261) interacts with substrate. Asp263 serves as the catalytic Nucleophile. Substrate contacts are provided by residues 266-267 (KH) and His267. His267 provides a ligand contact to Ca(2+). The active-site Proton donor is Glu291. Residues His361, Asp405, and Arg409 each coordinate substrate. The segment at 441–528 (GSTQQRWINN…ATAVWQYTTA (88 aa)) is c. A d region spans residues 529–614 (ETTPTIGHVG…SNAYNNFTIL (86 aa)). Positions 532–612 (PTIGHVGPVM…VNSNAYNNFT (81 aa)) constitute an IPT/TIG domain. A CBM20 domain is found at 613-718 (ILTGDQVTVR…GTATVTVNWQ (106 aa)). Residues 615–718 (TGDQVTVRFV…GTATVTVNWQ (104 aa)) are e.

It belongs to the glycosyl hydrolase 13 family. As to quaternary structure, monomer. Ca(2+) is required as a cofactor.

It is found in the secreted. The enzyme catalyses Cyclizes part of a (1-&gt;4)-alpha-D-glucan chain by formation of a (1-&gt;4)-alpha-D-glucosidic bond.. This Niallia circulans (Bacillus circulans) protein is Cyclomaltodextrin glucanotransferase.